The chain runs to 478 residues: Protein nucleotidyltransferase YdiU (478 aa).

8 residues coordinate ATP: Gly-84, Gly-86, Arg-87, Lys-107, Asp-119, Gly-120, Arg-170, and Arg-177. Asp-246 functions as the Proton acceptor in the catalytic mechanism. Asn-247 and Asp-256 together coordinate Mg(2+). Residue Asp-256 coordinates ATP.

This sequence belongs to the SELO family. The cofactor is Mg(2+). Mn(2+) serves as cofactor.

It catalyses the reaction L-seryl-[protein] + ATP = 3-O-(5'-adenylyl)-L-seryl-[protein] + diphosphate. The enzyme catalyses L-threonyl-[protein] + ATP = 3-O-(5'-adenylyl)-L-threonyl-[protein] + diphosphate. It carries out the reaction L-tyrosyl-[protein] + ATP = O-(5'-adenylyl)-L-tyrosyl-[protein] + diphosphate. The catalysed reaction is L-histidyl-[protein] + UTP = N(tele)-(5'-uridylyl)-L-histidyl-[protein] + diphosphate. It catalyses the reaction L-seryl-[protein] + UTP = O-(5'-uridylyl)-L-seryl-[protein] + diphosphate. The enzyme catalyses L-tyrosyl-[protein] + UTP = O-(5'-uridylyl)-L-tyrosyl-[protein] + diphosphate. Nucleotidyltransferase involved in the post-translational modification of proteins. It can catalyze the addition of adenosine monophosphate (AMP) or uridine monophosphate (UMP) to a protein, resulting in modifications known as AMPylation and UMPylation. The chain is Protein nucleotidyltransferase YdiU from Escherichia coli O1:K1 / APEC.